The following is a 225-amino-acid chain: NAD(P)H-quinone oxidoreductase subunit K, chloroplastic (225 aa).

Residues Cys-43, Cys-44, Cys-108, and Cys-139 each contribute to the [4Fe-4S] cluster site.

Belongs to the complex I 20 kDa subunit family. In terms of assembly, NDH is composed of at least 16 different subunits, 5 of which are encoded in the nucleus. It depends on [4Fe-4S] cluster as a cofactor.

It is found in the plastid. The protein localises to the chloroplast thylakoid membrane. It carries out the reaction a plastoquinone + NADH + (n+1) H(+)(in) = a plastoquinol + NAD(+) + n H(+)(out). The enzyme catalyses a plastoquinone + NADPH + (n+1) H(+)(in) = a plastoquinol + NADP(+) + n H(+)(out). Its function is as follows. NDH shuttles electrons from NAD(P)H:plastoquinone, via FMN and iron-sulfur (Fe-S) centers, to quinones in the photosynthetic chain and possibly in a chloroplast respiratory chain. The immediate electron acceptor for the enzyme in this species is believed to be plastoquinone. Couples the redox reaction to proton translocation, and thus conserves the redox energy in a proton gradient. This Liriodendron tulipifera (Tuliptree) protein is NAD(P)H-quinone oxidoreductase subunit K, chloroplastic.